A 238-amino-acid chain; its full sequence is Large ribosomal subunit protein uL5c (238 aa).

It belongs to the universal ribosomal protein uL5 family. Part of the 50S ribosomal subunit; contacts the 5S rRNA.

The protein resides in the plastid. Its subcellular location is the chloroplast. In terms of biological role, binds 5S rRNA, forms part of the central protuberance of the 50S subunit. In Phaeodactylum tricornutum (strain CCAP 1055/1), this protein is Large ribosomal subunit protein uL5c (rpl5).